Reading from the N-terminus, the 186-residue chain is Napin embryo-specific (186 aa).

Positions 1 to 21 (MANKLFLVSATLALFFLLTNA) are cleaved as a signal peptide. 2 consecutive propeptides follow at residues 22-38 (SVYR…ATNP) and 77-97 (PSWT…QQQG).

Belongs to the 2S seed storage albumins family. The mature protein consists of a small and a large chain linked by disulfide bonds. Cotyledons and the axis.

The small, basic, water-soluble napins are one of the two major kinds of storage proteins synthesized in the seed during its maturation. The protein is Napin embryo-specific of Brassica napus (Rape).